The following is a 561-amino-acid chain: uncharacterized protein (561 aa).

2 helical membrane-spanning segments follow: residues 29-49 (FIFNVGSLTPTTAVLGVKKII) and 80-100 (FLFHTVGFFPIYTSSIGASII).

It is found in the cell membrane. This is an uncharacterized protein from Mycoplasma genitalium (strain ATCC 33530 / DSM 19775 / NCTC 10195 / G37) (Mycoplasmoides genitalium).